Reading from the N-terminus, the 85-residue chain is Small ribosomal subunit protein bS18 (85 aa).

The protein belongs to the bacterial ribosomal protein bS18 family. In terms of assembly, part of the 30S ribosomal subunit. Forms a tight heterodimer with protein bS6.

In terms of biological role, binds as a heterodimer with protein bS6 to the central domain of the 16S rRNA, where it helps stabilize the platform of the 30S subunit. The protein is Small ribosomal subunit protein bS18 of Solidesulfovibrio magneticus (strain ATCC 700980 / DSM 13731 / RS-1) (Desulfovibrio magneticus).